We begin with the raw amino-acid sequence, 498 residues long: Histidine--tRNA ligase (498 aa).

The protein belongs to the class-II aminoacyl-tRNA synthetase family. Homodimer.

Its subcellular location is the cytoplasm. It catalyses the reaction tRNA(His) + L-histidine + ATP = L-histidyl-tRNA(His) + AMP + diphosphate + H(+). The sequence is that of Histidine--tRNA ligase from Bartonella quintana (strain Toulouse) (Rochalimaea quintana).